A 256-amino-acid polypeptide reads, in one-letter code: Thiazole synthase (256 aa).

Lys-91 (schiff-base intermediate with DXP) is an active-site residue. 1-deoxy-D-xylulose 5-phosphate contacts are provided by residues Gly-152, 179-180 (AG), and 201-202 (NT).

The protein belongs to the ThiG family. In terms of assembly, homotetramer. Forms heterodimers with either ThiH or ThiS.

The protein localises to the cytoplasm. It carries out the reaction [ThiS sulfur-carrier protein]-C-terminal-Gly-aminoethanethioate + 2-iminoacetate + 1-deoxy-D-xylulose 5-phosphate = [ThiS sulfur-carrier protein]-C-terminal Gly-Gly + 2-[(2R,5Z)-2-carboxy-4-methylthiazol-5(2H)-ylidene]ethyl phosphate + 2 H2O + H(+). Its pathway is cofactor biosynthesis; thiamine diphosphate biosynthesis. Functionally, catalyzes the rearrangement of 1-deoxy-D-xylulose 5-phosphate (DXP) to produce the thiazole phosphate moiety of thiamine. Sulfur is provided by the thiocarboxylate moiety of the carrier protein ThiS. In vitro, sulfur can be provided by H(2)S. In Erwinia tasmaniensis (strain DSM 17950 / CFBP 7177 / CIP 109463 / NCPPB 4357 / Et1/99), this protein is Thiazole synthase.